We begin with the raw amino-acid sequence, 129 residues long: Lysozyme C (129 aa).

The 129-residue stretch at 1 to 129 folds into the C-type lysozyme domain; sequence KIYTRCELAA…VSKWIKDCKL (129 aa). 4 disulfide bridges follow: Cys6-Cys127, Cys30-Cys115, Cys64-Cys80, and Cys76-Cys94. Catalysis depends on residues Glu35 and Asp52.

This sequence belongs to the glycosyl hydrolase 22 family. As to quaternary structure, monomer.

The protein localises to the secreted. It catalyses the reaction Hydrolysis of (1-&gt;4)-beta-linkages between N-acetylmuramic acid and N-acetyl-D-glucosamine residues in a peptidoglycan and between N-acetyl-D-glucosamine residues in chitodextrins.. In terms of biological role, lysozymes have primarily a bacteriolytic function; those in tissues and body fluids are associated with the monocyte-macrophage system and enhance the activity of immunoagents. In Crax fasciolata (Bare-faced curassow), this protein is Lysozyme C (LYZ).